The sequence spans 471 residues: Probable flavin-containing monoamine oxidase B (471 aa).

Cys-406 is subject to S-8alpha-FAD cysteine.

This sequence belongs to the flavin monoamine oxidase family. Requires FAD as cofactor.

It carries out the reaction a secondary aliphatic amine + O2 + H2O = a primary amine + an aldehyde + H2O2. This Dictyostelium discoideum (Social amoeba) protein is Probable flavin-containing monoamine oxidase B (maoB-1).